A 544-amino-acid polypeptide reads, in one-letter code: CTP synthase (544 aa).

The tract at residues 1 to 266 is amidoligase domain; that stretch reads MTRFVFITGG…DREVLRHFNL (266 aa). Residue serine 13 coordinates CTP. Serine 13 is a binding site for UTP. 14–19 contributes to the ATP binding site; it reads SLGKGI. Residue tyrosine 54 coordinates L-glutamine. Aspartate 71 is an ATP binding site. Residues aspartate 71 and glutamate 140 each contribute to the Mg(2+) site. Residues 147-149, 187-192, and lysine 223 each bind CTP; these read DIE and KTKPTQ. Residues 187–192 and lysine 223 each bind UTP; that span reads KTKPTQ. The Glutamine amidotransferase type-1 domain maps to 292-543; the sequence is KIAIVGKYIT…VAAAVRQARL (252 aa). Position 354 (glycine 354) interacts with L-glutamine. The active-site Nucleophile; for glutamine hydrolysis is cysteine 381. L-glutamine-binding positions include 382–385, glutamate 405, and arginine 471; that span reads FGMQ. Active-site residues include histidine 516 and glutamate 518.

This sequence belongs to the CTP synthase family. Homotetramer.

It catalyses the reaction UTP + L-glutamine + ATP + H2O = CTP + L-glutamate + ADP + phosphate + 2 H(+). It carries out the reaction L-glutamine + H2O = L-glutamate + NH4(+). The catalysed reaction is UTP + NH4(+) + ATP = CTP + ADP + phosphate + 2 H(+). It functions in the pathway pyrimidine metabolism; CTP biosynthesis via de novo pathway; CTP from UDP: step 2/2. Allosterically activated by GTP, when glutamine is the substrate; GTP has no effect on the reaction when ammonia is the substrate. The allosteric effector GTP functions by stabilizing the protein conformation that binds the tetrahedral intermediate(s) formed during glutamine hydrolysis. Inhibited by the product CTP, via allosteric rather than competitive inhibition. In terms of biological role, catalyzes the ATP-dependent amination of UTP to CTP with either L-glutamine or ammonia as the source of nitrogen. Regulates intracellular CTP levels through interactions with the four ribonucleotide triphosphates. This chain is CTP synthase, found in Granulibacter bethesdensis (strain ATCC BAA-1260 / CGDNIH1).